A 342-amino-acid chain; its full sequence is (Lyso)-N-acylphosphatidylethanolamine lipase (342 aa).

Positions 70–201 constitute an AB hydrolase-1 domain; sequence PLVMVHGFGG…KAVASVLGRS (132 aa).

The protein belongs to the peptidase S33 family. ABHD4/ABHD5 subfamily.

It catalyses the reaction N-hexadecanoyl-1,2-di-(9Z-octadecenoyl)-sn-glycero-3-phosphoethanolamine + H2O = N-hexadecanoyl-1-(9Z-octadecenoyl)-sn-glycero-3-phosphoethanolamine + (9Z)-octadecenoate + H(+). The catalysed reaction is an N-acyl-1,2-diacyl-sn-glycero-3-phosphoethanolamine + H2O = N,1-diacyl-sn-glycero-3-phosphoethanolamine + a fatty acid + H(+). The enzyme catalyses N-hexadecanoyl-1-(9Z-octadecenoyl)-sn-glycero-3-phosphoethanolamine + H2O = N-hexadecanoyl-sn-glycero-3-phosphoethanolamine + (9Z)-octadecenoate + H(+). It carries out the reaction N-octadecanoyl-1-(9Z-octadecenoyl)-sn-glycero-3-phosphoethanolamine + H2O = N-octadecanoyl-sn-glycero-3-phospho-ethanolamine + (9Z)-octadecenoate + H(+). It catalyses the reaction N-eicosanoyl-1-(9Z-octadecenoyl)-sn-glycero-3-phosphoethanolamine + H2O = N-eicosanoyl-sn-glycero-3-phosphoethanolamine + (9Z)-octadecenoate + H(+). The catalysed reaction is N,1-di-(9Z-octadecenoyl)-sn-glycero-3-phosphoethanolamine + H2O = N-(9Z-octadecenoyl)-sn-glycero-3-phosphoethanolamine + (9Z)-octadecenoate + H(+). The enzyme catalyses N-(5Z,8Z,11Z,14Z-eicosatetraenoyl)-1-(9Z-octadecenoyl)-sn-glycero-3-phosphoethanolamine + H2O = N-(5Z,8Z,11Z,14Z-eicosatetraenoyl)-sn-glycero-3-phosphoethanolamine + (9Z)-octadecenoate + H(+). It carries out the reaction 1-octadecanoyl-2-(9Z-octadecenoyl)-sn-glycero-3-phospho-(N-hexadecanoyl)-serine + H2O = 1-octadecanoyl-2-hydroxy-sn-glycero-3-phospho-(N-hexadecanoyl)-serine + (9Z)-octadecenoate + H(+). It catalyses the reaction 1-O-(1Z-octadecenoyl)-2-(9Z-octadecenoyl)-sn-glycero-3-phospho-N-hexadecanoyl-ethanolamine + H2O = 1-O-(1Z-octadecenyl)-sn-glycero-3-phospho-N-hexadecanoyl-ethanolamine + (9Z)-octadecenoate + H(+). The catalysed reaction is N,1-diacyl-sn-glycero-3-phosphoethanolamine + H2O = N-acyl-sn-glycero-3-phosphoethanolamine + a fatty acid + H(+). Lysophospholipase selective for N-acyl phosphatidylethanolamine (NAPE). Contributes to the biosynthesis of N-acyl ethanolamines, including the endocannabinoid anandamide by hydrolyzing the sn-1 and sn-2 acyl chains from N-acyl phosphatidylethanolamine (NAPE) generating glycerophospho-N-acyl ethanolamine (GP-NAE), an intermediate for N-acyl ethanolamine biosynthesis. Hydrolyzes substrates bearing saturated, monounsaturated, polyunsaturated N-acyl chains. Shows no significant activity towards other lysophospholipids, including lysophosphatidylcholine, lysophosphatidylethanolamine and lysophosphatidylserine. The protein is (Lyso)-N-acylphosphatidylethanolamine lipase of Homo sapiens (Human).